Consider the following 438-residue polypeptide: MHPLPSVALLSAIGAVAAQVGPWGQCGGRSYTGETSCVSGWSCVLFNEWYSQCQPATTTSTSSVSATAAPSSTSSSKESVPSATTSKKPVPTGSSSFVKADGLKFNIDGETKYFAGTNAYWLPFLTNDADVDSVMDNLQKAGLKILRTWGFNDVNSKPSSGTVYFQLHDPSTGTTTINTGADGLQRLDYVVSAAEKRGIKLLIPLVNNWDDYGGMNAYVKAYGGSKTEWYTNSKIQSVYQAYIKAVVSRYRDSPAIMAWELSNEARCQGCSTDVIYNWTAKTSAYIKSLDPNHMVATGDEGMGVTVDSDGSYPYSTYEGSDFAKNLAAPDIDFGVFHLYTEDWGIKDNSWGNGWVTSHAKVCKAAGKPCLFEEYGLKDDHCSASLTWQKTSVSSGMAADLFWQYGQTLSTGPSPNDHFTIYYGTSDWQCGVADHLSTL.

Positions 1–17 are cleaved as a signal peptide; sequence MHPLPSVALLSAIGAVA. Residues 19–54 form the CBM1 domain; it reads QVGPWGQCGGRSYTGETSCVSGWSCVLFNEWYSQCQ. The tract at residues 60 to 96 is ser-rich linker; that stretch reads STSSVSATAAPSSTSSSKESVPSATTSKKPVPTGSSS. The span at 61–86 shows a compositional bias: low complexity; sequence TSSVSATAAPSSTSSSKESVPSATTS. A disordered region spans residues 61 to 92; that stretch reads TSSVSATAAPSSTSSSKESVPSATTSKKPVPT. The interval 97 to 438 is catalytic; it reads FVKADGLKFN…CGVADHLSTL (342 aa). Residues tryptophan 149 and asparagine 263 each contribute to the substrate site. Glutamate 264 (proton donor) is an active-site residue. The N-linked (GlcNAc...) asparagine glycan is linked to asparagine 277. Tyrosine 339 contributes to the substrate binding site. The active-site Nucleophile is glutamate 373. Tryptophan 402 contributes to the substrate binding site.

This sequence belongs to the glycosyl hydrolase 5 (cellulase A) family.

It localises to the secreted. It catalyses the reaction Random hydrolysis of (1-&gt;4)-beta-D-mannosidic linkages in mannans, galactomannans and glucomannans.. In terms of biological role, endo-1,4-mannanase, a crucial enzyme for depolymerization of seed galactomannans and wood galactoglucomannans. The protein is Mannan endo-1,4-beta-mannosidase F (manF) of Aspergillus fumigatus (strain ATCC MYA-4609 / CBS 101355 / FGSC A1100 / Af293) (Neosartorya fumigata).